Consider the following 574-residue polypeptide: Multidrug and toxin extrusion protein 1 (574 aa).

The Cytoplasmic portion of the chain corresponds to 1-51; that stretch reads MEGQAAETNHRAETVVRAELCLSAEQGPETTAYSQKRCLFLPMEVWQEAQQ. A helical transmembrane segment spans residues 52–72; sequence LLALAAPAFLSQLMIFLISIV. Residues 73–86 are Extracellular-facing; sequence SSIFCGHLGKVELD. A helical transmembrane segment spans residues 87 to 107; that stretch reads AVSLAITIINITGVAVGTGLA. Over 108–133 the chain is Cytoplasmic; sequence GACDTLISQTFGGSNLKLVGIILQRG. A helical transmembrane segment spans residues 134-154; it reads ILILLLFCFPCWALLINTESI. The Extracellular segment spans residues 155–168; the sequence is LLLFRQDPEVSKLT. A helical transmembrane segment spans residues 169–189; sequence QIYVLIFLPALPAAFLYQLLA. Topologically, residues 190-204 are cytoplasmic; that stretch reads KYLQNQGIIYPQVLT. Residues 205-225 form a helical membrane-spanning segment; sequence GFIANIFNALFNYILLYVLGL. The Extracellular segment spans residues 226 to 230; the sequence is GVMGS. The helical transmembrane segment at 231–251 threads the bilayer; that stretch reads ACANTVSQFIQMILLFLYIVW. Residues 252 to 271 lie on the Cytoplasmic side of the membrane; the sequence is RRLYADTWGGWSQACFEEWG. The chain crosses the membrane as a helical span at residues 272–291; that stretch reads AFIRLAVASMLMLCIEWWAF. The Extracellular portion of the chain corresponds to 292–309; the sequence is EISMFLAGVLGMVDLAAQ. Residues 310–330 traverse the membrane as a helical segment; sequence AIIYQVAIVVYLIPLGLCIAG. The Cytoplasmic portion of the chain corresponds to 331 to 350; the sequence is SIRVGHGLGAGNTEQAKRSA. The helical transmembrane segment at 351–371 threads the bilayer; sequence LVVLCMTELCALLSGILLATL. Residues 372–384 lie on the Extracellular side of the membrane; the sequence is KDVVAYIFTSDPN. Residues 385–405 form a helical membrane-spanning segment; sequence IVALVSYVLPVYSACLLFDAC. The Cytoplasmic portion of the chain corresponds to 406 to 430; the sequence is VAACGGILRGSGKLKVGAISHTVGY. The chain crosses the membrane as a helical span at residues 431-451; that stretch reads YVIGLPLGISLMFAAKLGIIG. Topologically, residues 452-453 are extracellular; the sequence is FW. Residues 454–472 traverse the membrane as a helical segment; that stretch reads FGILACGIAQSIFLIIFVF. At 473-549 the chain is on the cytoplasmic side; the sequence is KIDWKRASEE…AGAAQHTRTL (77 aa). The disordered stretch occupies residues 500 to 541; it reads KPSVYQEGCPTEQGDVDPGNVESIEFSQSSTSSEGTSPTPAG. Residues 521–538 are compositionally biased toward low complexity; it reads ESIEFSQSSTSSEGTSPT. The helical transmembrane segment at 550 to 570 threads the bilayer; the sequence is ILTRGLALGCAVGTLIIGIVI. Topologically, residues 571 to 574 are extracellular; the sequence is RLSV.

Belongs to the multi antimicrobial extrusion (MATE) (TC 2.A.66.1) family.

Its subcellular location is the cell membrane. The protein resides in the apical cell membrane. The catalysed reaction is thiamine(out) + H(+)(in) = thiamine(in) + H(+)(out). It catalyses the reaction estrone 3-sulfate(in) + H(+)(out) = estrone 3-sulfate(out) + H(+)(in). It carries out the reaction creatinine(in) + H(+)(out) = creatinine(out) + H(+)(in). The enzyme catalyses agmatine(in) + H(+)(out) = agmatine(out) + H(+)(in). In terms of biological role, multidrug efflux pump that functions as a H(+)/organic cation antiporter. Mediates the secretion of cationic compounds including drugs, toxins and endogenous metabolites. Plays a role physiological role in the excretion of drugs, toxins and endogenous metabolites through the kidney and liver, into urine and bile respectively. The protein is Multidrug and toxin extrusion protein 1 (slc47a1) of Xenopus tropicalis (Western clawed frog).